The sequence spans 118 residues: MIEALLVATGGFFGAITRFAISNWFKKRNKTSFPIATFLINITGAFLLGYIIGSGVTTGWQLLLGTGFMGAFTTFSTFKLESVQLLNRKNFSTFLLYLSATYIVGILFAFLGMQLGGI.

The next 4 membrane-spanning stretches (helical) occupy residues 1–21, 33–53, 55–75, and 93–113; these read MIEA…RFAI, FPIA…YIIG, GVTT…FTTF, and TFLL…FLGM. Positions 70 and 73 each coordinate Na(+).

The protein belongs to the fluoride channel Fluc/FEX (TC 1.A.43) family.

It localises to the cell membrane. It catalyses the reaction fluoride(in) = fluoride(out). Na(+) is not transported, but it plays an essential structural role and its presence is essential for fluoride channel function. Fluoride-specific ion channel. Important for reducing fluoride concentration in the cell, thus reducing its toxicity. This is Fluoride-specific ion channel FluC 2 from Bacillus cereus (strain ZK / E33L).